Consider the following 921-residue polypeptide: Retinoblastoma-associated protein (921 aa).

2 disordered regions span residues 1-31 (MPPK…PPGG) and 603-634 (RSPK…QKPQ). Residues 612–634 (HPQSGTSNPDAQPSATSQTQKPQ) are compositionally biased toward polar residues. The Bipartite nuclear localization signal signature appears at 853 to 869 (KRSAEPSDAPKPLKRLR). The tract at residues 873-921 (EGQDEADGGKHLPQESKFQQKLAEMTSTRTRMQKQKLNDGNDTSANEEK) is disordered. The span at 910–921 (NDGNDTSANEEK) shows a compositional bias: polar residues.

Belongs to the retinoblastoma protein (RB) family. In terms of assembly, interacts with and sequesters the E2F1 transcription factor, thereby inhibiting E2F1 transcription. Interacts with SUV39H1, KMT5B and KMT5C. (Microbial infection) Interacts with, and is inhibited by fowl adenovirus 1 protein GAM-1. In terms of processing, phosphorylated in G1, thereby releasing E2F1 which is then able to activate cell growth. Dephosphorylated at the late M phase. Phosphorylation of domain C promotes interaction between the C-terminal domain C and the Pocket domain, and thereby inhibits interactions with heterodimeric E2F/DP transcription factor complexes.

The protein localises to the nucleus. It is found in the cytoplasm. Its function is as follows. Tumor suppressor that is a key regulator of the G1/S transition of the cell cycle. The hypophosphorylated form binds transcription regulators of the E2F family, preventing transcription of E2F-responsive genes. Both physically blocks E2Fs transactivating domain and recruits chromatin-modifying enzymes that actively repress transcription. Cyclin and CDK-dependent phosphorylation of RB1 induces its dissociation from E2Fs, thereby activating transcription of E2F responsive genes and triggering entry into S phase. RB1 also promotes the G0-G1 transition upon phosphorylation and activation by CDK3/cyclin-C. In Gallus gallus (Chicken), this protein is Retinoblastoma-associated protein (RB1).